Reading from the N-terminus, the 202-residue chain is UPF0637 protein Exig_2520 (202 aa).

This sequence belongs to the UPF0637 family.

The protein is UPF0637 protein Exig_2520 of Exiguobacterium sibiricum (strain DSM 17290 / CCUG 55495 / CIP 109462 / JCM 13490 / 255-15).